The sequence spans 642 residues: DNA primase (642 aa).

The CHC2-type zinc finger occupies 41–65 (CPFHNEKSPSFHVRPNHGHFHCFGC). Residues 262–348 (HQAVVVEGYT…AGKSFVAVAA (87 aa)) form the Toprim domain. Positions 268, 319, and 321 each coordinate Mg(2+). Residues 445–480 (NRRSVPERTRRRSVSVEQSPFMQPPGAPADQLAARP) form a disordered region.

The protein belongs to the DnaG primase family. In terms of assembly, monomer. Interacts with DnaB. It depends on Zn(2+) as a cofactor. Mg(2+) is required as a cofactor.

It catalyses the reaction ssDNA + n NTP = ssDNA/pppN(pN)n-1 hybrid + (n-1) diphosphate.. In terms of biological role, RNA polymerase that catalyzes the synthesis of short RNA molecules used as primers for DNA polymerase during DNA replication. The polypeptide is DNA primase (Mycobacterium leprae (strain TN)).